The chain runs to 1307 residues: tRNA(adenine(34)) deaminase, chloroplastic (1307 aa).

Residues 1–55 constitute a chloroplast transit peptide; sequence MFNTYTNSLQWPIRSRNQQDYCSLLPERSESYKLSKAYTSSRCYCVSSRSSCCCC. Disordered stretches follow at residues 245-377, 439-458, 544-563, 576-618, 753-807, 837-957, and 975-1073; these read EYIG…ESTG, SSED…SSQE, HNPL…SHTS, EKRL…GQTT, GVIN…ATEG, SRAG…EEGG, and LPSR…SVSA. Over residues 267–278 the composition is skewed to low complexity; sequence SSCSSYYSLASS. Positions 280-309 form a coiled coil; that stretch reads EFESDTEDQEEDVEIYRENVRSSEKKVVDQ. The segment covering 281–292 has biased composition (acidic residues); sequence FESDTEDQEEDV. A compositionally biased stretch (basic and acidic residues) spans 293 to 321; it reads EIYRENVRSSEKKVVDQSAKRLKSRKEAS. A compositionally biased stretch (polar residues) spans 367 to 377; it reads QTENRVSESTG. Basic and acidic residues predominate over residues 439–448; it reads SSEDRVSEMR. 2 stretches are compositionally biased toward polar residues: residues 546–563 and 582–591; these read PLQT…SHTS and QGSTTAVQSD. 2 stretches are compositionally biased toward basic and acidic residues: residues 592-615 and 760-771; these read SKVE…KKDG and EEQRAESNQLKR. A compositionally biased stretch (polar residues) spans 852 to 863; it reads SSPNESVSSATW. The span at 866 to 883 shows a compositional bias: basic and acidic residues; the sequence is GREHDGSSDDNTKGDKVL. Composition is skewed to polar residues over residues 895–907, 924–947, and 1045–1073; these read VGQT…SEYP, SSPS…SGNQ, and SGSS…SVSA. One can recognise a CMP/dCMP-type deaminase domain in the interval 1108–1230; sequence TVDEIFMREA…RLFPGGEGNG (123 aa). Histidine 1159 is a Zn(2+) binding site. Glutamate 1161 (proton donor) is an active-site residue. Zn(2+) contacts are provided by cysteine 1189 and cysteine 1192. The tract at residues 1268–1293 is disordered; that stretch reads QLRRKKKDKNSDPPTPTDHHHHHLPK.

The protein belongs to the cytidine and deoxycytidylate deaminase family. In terms of assembly, homodimer. Requires Zn(2+) as cofactor.

Its subcellular location is the plastid. The protein resides in the chloroplast. The enzyme catalyses adenosine(34) in tRNA + H2O + H(+) = inosine(34) in tRNA + NH4(+). Its function is as follows. Deaminates adenosines to inosines in tRNA-Arg(ACG). Exclusively involved in A-to-I editing of the prokaryote-type chloroplast-tRNA and not involved in C-to-U editing. This Arabidopsis thaliana (Mouse-ear cress) protein is tRNA(adenine(34)) deaminase, chloroplastic (TADA).